The primary structure comprises 253 residues: MSESSEKTSTTHFGFRQVAAKDKKTLVAEVFTSVSRRYDLMNDLMSLGIHRAWKRYFVATAQVKSGDRVLDLAGGTGDIAMLLKNRVGAEGSIVLGDINASMLSVGRDRLIDRGVVARLEYVQCNAEALPFQDKCFDLVTMSFGLRNVTDKDTALREMFRVLKVGGQARVLEFSTVTAEWFKPIYDFHSFQVLPRLGWLFARDAASYRYLAESIRKHPPQEELQAMMGAAGFERCGYRNLTGGIVAIHSGYKY.

Residues T76, D97, 125 to 126, and S142 contribute to the S-adenosyl-L-methionine site; that span reads NA.

The protein belongs to the class I-like SAM-binding methyltransferase superfamily. MenG/UbiE family.

The enzyme catalyses a 2-demethylmenaquinol + S-adenosyl-L-methionine = a menaquinol + S-adenosyl-L-homocysteine + H(+). It catalyses the reaction a 2-methoxy-6-(all-trans-polyprenyl)benzene-1,4-diol + S-adenosyl-L-methionine = a 5-methoxy-2-methyl-3-(all-trans-polyprenyl)benzene-1,4-diol + S-adenosyl-L-homocysteine + H(+). It participates in quinol/quinone metabolism; menaquinone biosynthesis; menaquinol from 1,4-dihydroxy-2-naphthoate: step 2/2. The protein operates within cofactor biosynthesis; ubiquinone biosynthesis. Methyltransferase required for the conversion of demethylmenaquinol (DMKH2) to menaquinol (MKH2) and the conversion of 2-polyprenyl-6-methoxy-1,4-benzoquinol (DDMQH2) to 2-polyprenyl-3-methyl-6-methoxy-1,4-benzoquinol (DMQH2). This chain is Ubiquinone/menaquinone biosynthesis C-methyltransferase UbiE, found in Xylella fastidiosa (strain M12).